Reading from the N-terminus, the 331-residue chain is Ornithine carbamoyltransferase (331 aa).

Carbamoyl phosphate-binding positions include 55–58 (STRT), Gln82, Arg106, and 133–136 (HPTQ). Residues Asn166, Asp230, and 234–235 (SM) contribute to the L-ornithine site. Carbamoyl phosphate-binding positions include 272–273 (CL) and Arg317.

It belongs to the aspartate/ornithine carbamoyltransferase superfamily. OTCase family.

It is found in the cytoplasm. It carries out the reaction carbamoyl phosphate + L-ornithine = L-citrulline + phosphate + H(+). It participates in amino-acid biosynthesis; L-arginine biosynthesis; L-arginine from L-ornithine and carbamoyl phosphate: step 1/3. Reversibly catalyzes the transfer of the carbamoyl group from carbamoyl phosphate (CP) to the N(epsilon) atom of ornithine (ORN) to produce L-citrulline. The polypeptide is Ornithine carbamoyltransferase (Neisseria gonorrhoeae (strain ATCC 700825 / FA 1090)).